An 86-amino-acid chain; its full sequence is uncharacterized protein (86 aa).

This is an uncharacterized protein from Ovis aries (Sheep).